The primary structure comprises 87 residues: Phosphoribosyl-ATP pyrophosphatase (87 aa).

It belongs to the PRA-PH family.

Its subcellular location is the cytoplasm. It carries out the reaction 1-(5-phospho-beta-D-ribosyl)-ATP + H2O = 1-(5-phospho-beta-D-ribosyl)-5'-AMP + diphosphate + H(+). Its pathway is amino-acid biosynthesis; L-histidine biosynthesis; L-histidine from 5-phospho-alpha-D-ribose 1-diphosphate: step 2/9. The polypeptide is Phosphoribosyl-ATP pyrophosphatase (Thermobifida fusca (strain YX)).